A 1001-amino-acid polypeptide reads, in one-letter code: Translation initiation factor IF-2 (1001 aa).

The interval 34 to 404 is disordered; that stretch reads KSHSSTISES…SRGDRRDRKE (371 aa). The span at 67–80 shows a compositional bias: basic and acidic residues; the sequence is SRPESKEDKSDPKQ. Composition is skewed to pro residues over residues 98–107, 147–157, and 163–172; these read PARPTPPPRP, PTQPLAPPPVP, and PSKPAPPTPP. Positions 173-190 are enriched in low complexity; the sequence is AKKAAPAPRLAGPPGRTA. 2 stretches are compositionally biased toward basic and acidic residues: residues 212–230 and 238–252; these read SLKD…EEKV and PKPK…PPRP. Residues 332 to 342 are compositionally biased toward acidic residues; it reads DDDDDDLDIDG. Composition is skewed to low complexity over residues 362-371 and 385-394; these read KSLAAKPSTP and AGSSAGGSSR. The segment covering 395–404 has biased composition (basic and acidic residues); that stretch reads SRGDRRDRKE. Positions 493 to 666 constitute a tr-type G domain; it reads RRPPVVTIMG…LLVSEVEELV (174 aa). A G1 region spans residues 502–509; the sequence is GHVDHGKT. A GTP-binding site is contributed by 502-509; that stretch reads GHVDHGKT. The G2 stretch occupies residues 527–531; that stretch reads GITQH. Residues 552–555 are G3; that stretch reads DTPG. Residues 552-556 and 606-609 contribute to the GTP site; these read DTPGH and NKVD. Positions 606–609 are G4; it reads NKVD. A G5 region spans residues 642–644; it reads SAL.

The protein belongs to the TRAFAC class translation factor GTPase superfamily. Classic translation factor GTPase family. IF-2 subfamily.

The protein resides in the cytoplasm. Functionally, one of the essential components for the initiation of protein synthesis. Protects formylmethionyl-tRNA from spontaneous hydrolysis and promotes its binding to the 30S ribosomal subunits. Also involved in the hydrolysis of GTP during the formation of the 70S ribosomal complex. This chain is Translation initiation factor IF-2 (infB), found in Synechocystis sp. (strain ATCC 27184 / PCC 6803 / Kazusa).